Reading from the N-terminus, the 186-residue chain is TATA-box-binding protein E (186 aa).

2 repeat units span residues 10 to 86 (IENV…FDKL) and 101 to 179 (VQNI…TSRL).

The protein belongs to the TBP family.

General factor that plays a role in the activation of archaeal genes transcribed by RNA polymerase. Binds specifically to the TATA box promoter element which lies close to the position of transcription initiation. This chain is TATA-box-binding protein E (tbpE), found in Halobacterium salinarum (strain ATCC 700922 / JCM 11081 / NRC-1) (Halobacterium halobium).